The following is a 305-amino-acid chain: Glycine--tRNA ligase alpha subunit (305 aa).

The protein belongs to the class-II aminoacyl-tRNA synthetase family. Tetramer of two alpha and two beta subunits.

The protein localises to the cytoplasm. It carries out the reaction tRNA(Gly) + glycine + ATP = glycyl-tRNA(Gly) + AMP + diphosphate. The protein is Glycine--tRNA ligase alpha subunit of Streptococcus uberis (strain ATCC BAA-854 / 0140J).